Consider the following 399-residue polypeptide: MSDLSYLDTLGNKELLAKCLEHGLPGVPVTDSTRSVIIRRLKAKITGVPLNKSKSASKKAIPRRETVHGSQVTTPTSEPVRRTPGKSAGRTSSNNNKISEQSRRTIAYGLDNTSISGRSVQTTTTVSDMSSQSEDDDSYMVDSPVPNYSKDQQPRRYVSLAKSGVLTTSYTREVDQPLYEQEDIPRSYTYERPHVPAATLHALPTYEPRIEPSTYRPTDLGFSRPLLTQTNLNSTSYEESSTYNPKLSPISPRNTFSGSARPFGGPAPAPAPIRQRQSVPVSGSNLARGRLLQPTTAVNTLYPQLNEFYDQPNDAGEPMETESESEVEEVPINSHFQKNRFSPLARKPLVRHHDQVSPMAQFRALAVSLDQKYNLKFYLILVVSVMLATMVYVVLTPNA.

Residues 4–48 (LSYLDTLGNKELLAKCLEHGLPGVPVTDSTRSVIIRRLKAKITGV) form the LEM domain. Disordered regions lie at residues 49–103 (PLNK…EQSR), 119–141 (SVQTTTTVSDMSSQSEDDDSYMV), and 233–287 (NSTS…SNLA). 2 stretches are compositionally biased toward polar residues: residues 68 to 77 (HGSQVTTPTS) and 89 to 99 (GRTSSNNNKIS). Polar residues predominate over residues 233-256 (NSTSYEESSTYNPKLSPISPRNTF). The chain crosses the membrane as a helical span at residues 377–397 (FYLILVVSVMLATMVYVVLTP).

Its subcellular location is the nucleus inner membrane. The protein localises to the cytoplasm. It localises to the nucleus. The protein resides in the nucleoplasm. It is found in the endoplasmic reticulum. Functionally, inner nuclear membrane protein. May have a role in maintaining the structural integrity of the nuclear lamina. During pupal development, plays essential and redundant functions with the other LEM domain proteins; MAN1 and Ote. Also has a redundant but important role with Ote in larval development. In Drosophila melanogaster (Fruit fly), this protein is LEM domain-containing protein Bocksbeutel.